We begin with the raw amino-acid sequence, 157 residues long: Crossover junction endodeoxyribonuclease RuvC (157 aa).

Catalysis depends on residues aspartate 7, glutamate 67, and aspartate 140. Positions 7, 67, and 140 each coordinate Mg(2+).

This sequence belongs to the RuvC family. Homodimer which binds Holliday junction (HJ) DNA. The HJ becomes 2-fold symmetrical on binding to RuvC with unstacked arms; it has a different conformation from HJ DNA in complex with RuvA. In the full resolvosome a probable DNA-RuvA(4)-RuvB(12)-RuvC(2) complex forms which resolves the HJ. Mg(2+) serves as cofactor.

The protein localises to the cytoplasm. The catalysed reaction is Endonucleolytic cleavage at a junction such as a reciprocal single-stranded crossover between two homologous DNA duplexes (Holliday junction).. In terms of biological role, the RuvA-RuvB-RuvC complex processes Holliday junction (HJ) DNA during genetic recombination and DNA repair. Endonuclease that resolves HJ intermediates. Cleaves cruciform DNA by making single-stranded nicks across the HJ at symmetrical positions within the homologous arms, yielding a 5'-phosphate and a 3'-hydroxyl group; requires a central core of homology in the junction. The consensus cleavage sequence is 5'-(A/T)TT(C/G)-3'. Cleavage occurs on the 3'-side of the TT dinucleotide at the point of strand exchange. HJ branch migration catalyzed by RuvA-RuvB allows RuvC to scan DNA until it finds its consensus sequence, where it cleaves and resolves the cruciform DNA. This Rickettsia akari (strain Hartford) protein is Crossover junction endodeoxyribonuclease RuvC.